The following is a 152-amino-acid chain: Endoribonuclease YbeY (152 aa).

3 residues coordinate Zn(2+): histidine 117, histidine 121, and histidine 127.

Belongs to the endoribonuclease YbeY family. It depends on Zn(2+) as a cofactor.

The protein localises to the cytoplasm. In terms of biological role, single strand-specific metallo-endoribonuclease involved in late-stage 70S ribosome quality control and in maturation of the 3' terminus of the 16S rRNA. The polypeptide is Endoribonuclease YbeY (Sulfurihydrogenibium sp. (strain YO3AOP1)).